Reading from the N-terminus, the 583-residue chain is ATP-dependent lipid A-core flippase (583 aa).

The next 5 membrane-spanning stretches (helical) occupy residues 27–47 (LAVA…MVSL), 69–89 (LLVF…TYCL), 142–162 (ALVS…LMFY), 165–185 (WQLS…IGFV), and 249–269 (AAAN…VLYL). The ABC transmembrane type-1 domain maps to 28 to 310 (AVAVVALIIN…LTNVTSQFQR (283 aa)). In terms of domain architecture, ABC transporter spans 342–578 (VNVKDISFTY…DGAYAQLHRI (237 aa)). Position 376–383 (376–383 (GRSGSGKS)) interacts with ATP.

Belongs to the ABC transporter superfamily. Lipid exporter (TC 3.A.1.106) family. As to quaternary structure, homodimer.

It localises to the cell inner membrane. It carries out the reaction ATP + H2O + lipid A-core oligosaccharideSide 1 = ADP + phosphate + lipid A-core oligosaccharideSide 2.. In terms of biological role, involved in lipopolysaccharide (LPS) biosynthesis. Translocates lipid A-core from the inner to the outer leaflet of the inner membrane. Transmembrane domains (TMD) form a pore in the inner membrane and the ATP-binding domain (NBD) is responsible for energy generation. The sequence is that of ATP-dependent lipid A-core flippase from Vibrio vulnificus (strain YJ016).